A 248-amino-acid polypeptide reads, in one-letter code: 3-deoxy-manno-octulosonate cytidylyltransferase (248 aa).

This sequence belongs to the KdsB family.

It is found in the cytoplasm. It catalyses the reaction 3-deoxy-alpha-D-manno-oct-2-ulosonate + CTP = CMP-3-deoxy-beta-D-manno-octulosonate + diphosphate. It functions in the pathway nucleotide-sugar biosynthesis; CMP-3-deoxy-D-manno-octulosonate biosynthesis; CMP-3-deoxy-D-manno-octulosonate from 3-deoxy-D-manno-octulosonate and CTP: step 1/1. The protein operates within bacterial outer membrane biogenesis; lipopolysaccharide biosynthesis. In terms of biological role, activates KDO (a required 8-carbon sugar) for incorporation into bacterial lipopolysaccharide in Gram-negative bacteria. This Desulfosudis oleivorans (strain DSM 6200 / JCM 39069 / Hxd3) (Desulfococcus oleovorans) protein is 3-deoxy-manno-octulosonate cytidylyltransferase.